The chain runs to 189 residues: Apolipoprotein D (189 aa).

Residues 1 to 20 (MVPVLLLLPALAGLFGAAEG) form the signal peptide. At glutamine 21 the chain carries Pyrrolidone carboxylic acid. 2 cysteine pairs are disulfide-bonded: cysteine 28-cysteine 134 and cysteine 61-cysteine 185. Residues asparagine 65 and asparagine 98 are each glycosylated (N-linked (GlcNAc...) asparagine).

It belongs to the calycin superfamily. Lipocalin family. In terms of assembly, homodimer.

It localises to the secreted. Its function is as follows. APOD occurs in the macromolecular complex with lecithin-transport and binding of bilin. Appears to be able to transport a variety of ligands in a number of different contexts. In Bos taurus (Bovine), this protein is Apolipoprotein D (APOD).